The primary structure comprises 330 residues: ADP-L-glycero-D-manno-heptose-6-epimerase (330 aa).

NADP(+)-binding positions include 11–12 (FI), 32–33 (DN), Lys-39, Lys-54, 75–79 (EGACS), and Asn-92. Catalysis depends on Tyr-139, which acts as the Proton acceptor. Lys-143 lines the NADP(+) pocket. Residue Asn-168 coordinates substrate. Val-169 and Lys-177 together coordinate NADP(+). Lys-177 functions as the Proton acceptor in the catalytic mechanism. Substrate contacts are provided by residues Arg-179, His-186, 200 to 203 (FGEY), Arg-213, and Tyr-292.

It belongs to the NAD(P)-dependent epimerase/dehydratase family. HldD subfamily. As to quaternary structure, homopentamer. The cofactor is NADP(+).

The enzyme catalyses ADP-D-glycero-beta-D-manno-heptose = ADP-L-glycero-beta-D-manno-heptose. The protein operates within nucleotide-sugar biosynthesis; ADP-L-glycero-beta-D-manno-heptose biosynthesis; ADP-L-glycero-beta-D-manno-heptose from D-glycero-beta-D-manno-heptose 7-phosphate: step 4/4. In terms of biological role, catalyzes the interconversion between ADP-D-glycero-beta-D-manno-heptose and ADP-L-glycero-beta-D-manno-heptose via an epimerization at carbon 6 of the heptose. The polypeptide is ADP-L-glycero-D-manno-heptose-6-epimerase (Burkholderia pseudomallei (strain 1026b)).